A 286-amino-acid chain; its full sequence is UDP-3-O-acyl-N-acetylglucosamine deacetylase (286 aa).

Zn(2+) is bound by residues histidine 79, histidine 237, and aspartate 241. Histidine 264 (proton donor) is an active-site residue.

This sequence belongs to the LpxC family. The cofactor is Zn(2+).

It carries out the reaction a UDP-3-O-[(3R)-3-hydroxyacyl]-N-acetyl-alpha-D-glucosamine + H2O = a UDP-3-O-[(3R)-3-hydroxyacyl]-alpha-D-glucosamine + acetate. Its pathway is glycolipid biosynthesis; lipid IV(A) biosynthesis; lipid IV(A) from (3R)-3-hydroxytetradecanoyl-[acyl-carrier-protein] and UDP-N-acetyl-alpha-D-glucosamine: step 2/6. In terms of biological role, catalyzes the hydrolysis of UDP-3-O-myristoyl-N-acetylglucosamine to form UDP-3-O-myristoylglucosamine and acetate, the committed step in lipid A biosynthesis. The chain is UDP-3-O-acyl-N-acetylglucosamine deacetylase from Brucella abortus (strain 2308).